The chain runs to 96 residues: Protein RnfH (96 aa).

Belongs to the UPF0125 (RnfH) family.

The sequence is that of Protein RnfH from Psychromonas ingrahamii (strain DSM 17664 / CCUG 51855 / 37).